Here is a 225-residue protein sequence, read N- to C-terminus: Leucyl/phenylalanyl-tRNA--protein transferase (225 aa).

The protein belongs to the L/F-transferase family.

Its subcellular location is the cytoplasm. It catalyses the reaction N-terminal L-lysyl-[protein] + L-leucyl-tRNA(Leu) = N-terminal L-leucyl-L-lysyl-[protein] + tRNA(Leu) + H(+). The catalysed reaction is N-terminal L-arginyl-[protein] + L-leucyl-tRNA(Leu) = N-terminal L-leucyl-L-arginyl-[protein] + tRNA(Leu) + H(+). The enzyme catalyses L-phenylalanyl-tRNA(Phe) + an N-terminal L-alpha-aminoacyl-[protein] = an N-terminal L-phenylalanyl-L-alpha-aminoacyl-[protein] + tRNA(Phe). In terms of biological role, functions in the N-end rule pathway of protein degradation where it conjugates Leu, Phe and, less efficiently, Met from aminoacyl-tRNAs to the N-termini of proteins containing an N-terminal arginine or lysine. The chain is Leucyl/phenylalanyl-tRNA--protein transferase from Rhodopseudomonas palustris (strain TIE-1).